The following is a 656-amino-acid chain: FAST kinase domain-containing protein 3, mitochondrial (656 aa).

The 59-residue stretch at 587–645 (VALCIDGPQRFCLGSKHLLGKEAIKQRHLRLLGYQVVQVPYHELELLTSRLELVDYLQR) folds into the RAP domain.

This sequence belongs to the FAST kinase family.

It localises to the mitochondrion. Required for normal mitochondrial respiration. Increases steady-state levels and half-lives of a subset of mature mitochondrial mRNAs MT-ND2, MT-ND3, MT-CYTB, MT-CO2, and MT-ATP8/6. Promotes MT-CO1 mRNA translation and increases mitochondrial complex IV assembly and activity. This chain is FAST kinase domain-containing protein 3, mitochondrial (Fastkd3), found in Rattus norvegicus (Rat).